A 378-amino-acid polypeptide reads, in one-letter code: Deoxyguanosinetriphosphate triphosphohydrolase-like protein (378 aa).

The region spanning arginine 62 to asparagine 198 is the HD domain.

The protein belongs to the dGTPase family. Type 2 subfamily.

The polypeptide is Deoxyguanosinetriphosphate triphosphohydrolase-like protein (Paracoccus denitrificans (strain Pd 1222)).